Here is a 102-residue protein sequence, read N- to C-terminus: Thioredoxin (102 aa).

The Thioredoxin domain occupies 1-102; that stretch reads MVKVVSAENF…SLIRLINQHS (102 aa). A disulfide bond links cysteine 28 and cysteine 31.

It belongs to the thioredoxin family.

Its function is as follows. Participates in various redox reactions through the reversible oxidation of its active center dithiol to a disulfide and catalyzes dithiol-disulfide exchange reactions. The polypeptide is Thioredoxin (trxA) (Chlamydia caviae (strain ATCC VR-813 / DSM 19441 / 03DC25 / GPIC) (Chlamydophila caviae)).